The primary structure comprises 285 residues: RNA 5'-monophosphate methyltransferase (285 aa).

Residues arginine 46, asparagine 77, aspartate 111, aspartate 136 to isoleucine 137, and methionine 165 each bind S-adenosyl-L-methionine. The Bin3-type SAM domain maps to glutamate 53 to proline 275.

Belongs to the methyltransferase superfamily. As to quaternary structure, interacts with DICER1; the interaction may be mediated by RNA.

It localises to the cytoplasm. The enzyme catalyses a 5'-end 5'-phospho-ribonucleoside-RNA + S-adenosyl-L-methionine = a 5'-end (5'-methylphospho)-ribonucleoside-RNA + S-adenosyl-L-homocysteine. It catalyses the reaction a 5'-end 5'-phospho-ribonucleoside-RNA + 2 S-adenosyl-L-methionine = a 5'-end (5'-bismethylphospho)-ribonucleoside-RNA + 2 S-adenosyl-L-homocysteine. O-methyltransferase that specifically monomethylates 5'-monophosphate of cytoplasmic histidyl tRNA (tRNA(His)), acting as a capping enzyme by protecting tRNA(His) from cleavage by DICER1. Also able, with less efficiently, to methylate the 5' monophosphate of a subset of pre-miRNAs, acting as a negative regulator of miRNA processing. The 5' monophosphate of pre-miRNAs is recognized by DICER1 and is required for pre-miRNAs processing: methylation at this position reduces the processing of pre-miRNAs by DICER1. Was also reported to mediate dimethylation of pre-miR-145; however dimethylation cannot be reproduced by another group which observes a monomethylation of pre-miR-145. In Mus musculus (Mouse), this protein is RNA 5'-monophosphate methyltransferase.